A 349-amino-acid chain; its full sequence is Cell adhesion molecule CEACAM8 (349 aa).

The N-terminal stretch at 1–34 (MGPISAPSCRWRIPWQGLLLTASLFTFWNPPTTA) is a signal peptide. The Ig-like V-type domain occupies 35 to 142 (QLTIEAVPSN…EVTGQFSVHP (108 aa)). 11 N-linked (GlcNAc...) asparagine glycosylation sites follow: Asn-104, Asn-111, Asn-115, Asn-152, Asn-173, Asn-197, Asn-224, Asn-256, Asn-274, Asn-288, and Asn-309. 2 consecutive Ig-like C2-type domains span residues 145–232 (PKPS…VTLN) and 237–319 (PDAP…ITVS). A disulfide bridge links Cys-167 with Cys-215. Cys-259 and Cys-299 are oxidised to a cystine. The GPI-anchor amidated aspartate moiety is linked to residue Asp-320. Residues 321–349 (ALVQGSSPGLSARATVSIMIGVLARVALI) constitute a propeptide, removed in mature form.

It belongs to the immunoglobulin superfamily. CEA family. In terms of assembly, monomer. Heterodimer with CEACAM6; heterodimerizes via its Ig-like V-type domain. Glycosylated. In terms of tissue distribution, expressed in leukocytes of chronic myeloid Leukemia patients and bone marrow.

Its subcellular location is the cell membrane. It is found in the cell surface. Functionally, cell surface glycoprotein that plays a role in cell adhesion in a calcium-independent manner. Mediates heterophilic cell adhesion with other carcinoembryonic antigen-related cell adhesion molecules, such as CEACAM6. Heterophilic interaction with CEACAM8 occurs in activated neutrophils. This Homo sapiens (Human) protein is Cell adhesion molecule CEACAM8.